The following is a 681-amino-acid chain: Oligopeptidase A (681 aa).

Zn(2+) is bound at residue His-470. Residue Glu-471 is part of the active site. Zn(2+) contacts are provided by His-474 and His-477.

This sequence belongs to the peptidase M3 family. It depends on Zn(2+) as a cofactor.

The catalysed reaction is Hydrolysis of oligopeptides, with broad specificity. Gly or Ala commonly occur as P1 or P1' residues, but more distant residues are also important, as is shown by the fact that Z-Gly-Pro-Gly-|-Gly-Pro-Ala is cleaved, but not Z-(Gly)(5).. May play a specific role in the degradation of signal peptides after they are released from precursor forms of secreted proteins. Can cleave N-acetyl-L-Ala(4). The polypeptide is Oligopeptidase A (prlC) (Haemophilus influenzae (strain ATCC 51907 / DSM 11121 / KW20 / Rd)).